A 149-amino-acid chain; its full sequence is Succinate dehydrogenase assembly factor 2, mitochondrial (149 aa).

It belongs to the SDHAF2 family. As to quaternary structure, interacts with the flavoprotein subunit within the SDH catalytic dimer.

Its subcellular location is the mitochondrion matrix. Functionally, plays an essential role in the assembly of succinate dehydrogenase (SDH), an enzyme complex (also referred to as respiratory complex II) that is a component of both the tricarboxylic acid (TCA) cycle and the mitochondrial electron transport chain, and which couples the oxidation of succinate to fumarate with the reduction of ubiquinone (coenzyme Q) to ubiquinol. Required for flavinylation (covalent attachment of FAD) of the flavoprotein subunit of the SDH catalytic dimer. The protein is Succinate dehydrogenase assembly factor 2, mitochondrial of Scheffersomyces stipitis (strain ATCC 58785 / CBS 6054 / NBRC 10063 / NRRL Y-11545) (Yeast).